The sequence spans 301 residues: Protoheme IX farnesyltransferase (301 aa).

9 consecutive transmembrane segments (helical) span residues 29 to 49 (VVAL…PGTV), 51 to 71 (LVPL…AAAF), 96 to 116 (ISII…FIIL), 123 to 143 (LTAW…TAYL), 151 to 171 (IVVG…AVTG), 177 to 197 (ALLL…ALAI), 223 to 243 (CIFL…LVGM), 244 to 264 (CGPV…YKAW), and 281 to 301 (FSIY…YLWV).

Belongs to the UbiA prenyltransferase family. Protoheme IX farnesyltransferase subfamily.

Its subcellular location is the cell inner membrane. The enzyme catalyses heme b + (2E,6E)-farnesyl diphosphate + H2O = Fe(II)-heme o + diphosphate. It functions in the pathway porphyrin-containing compound metabolism; heme O biosynthesis; heme O from protoheme: step 1/1. Converts heme B (protoheme IX) to heme O by substitution of the vinyl group on carbon 2 of heme B porphyrin ring with a hydroxyethyl farnesyl side group. The polypeptide is Protoheme IX farnesyltransferase (Shewanella pealeana (strain ATCC 700345 / ANG-SQ1)).